Consider the following 184-residue polypeptide: NADH-quinone oxidoreductase subunit B 2 (184 aa).

C59, C60, C125, and C153 together coordinate [4Fe-4S] cluster.

It belongs to the complex I 20 kDa subunit family. As to quaternary structure, NDH-1 is composed of 14 different subunits. Subunits NuoB, C, D, E, F, and G constitute the peripheral sector of the complex. The cofactor is [4Fe-4S] cluster.

The protein localises to the cell inner membrane. The enzyme catalyses a quinone + NADH + 5 H(+)(in) = a quinol + NAD(+) + 4 H(+)(out). NDH-1 shuttles electrons from NADH, via FMN and iron-sulfur (Fe-S) centers, to quinones in the respiratory chain. Couples the redox reaction to proton translocation (for every two electrons transferred, four hydrogen ions are translocated across the cytoplasmic membrane), and thus conserves the redox energy in a proton gradient. The sequence is that of NADH-quinone oxidoreductase subunit B 2 from Solibacter usitatus (strain Ellin6076).